The following is a 115-amino-acid chain: Aspartate 1-decarboxylase (115 aa).

Ser24 acts as the Schiff-base intermediate with substrate; via pyruvic acid in catalysis. Ser24 is modified (pyruvic acid (Ser)). A substrate-binding site is contributed by Thr56. Tyr57 functions as the Proton donor in the catalytic mechanism. 72–74 (GAA) contacts substrate.

This sequence belongs to the PanD family. As to quaternary structure, heterooctamer of four alpha and four beta subunits. Pyruvate serves as cofactor. In terms of processing, is synthesized initially as an inactive proenzyme, which is activated by self-cleavage at a specific serine bond to produce a beta-subunit with a hydroxyl group at its C-terminus and an alpha-subunit with a pyruvoyl group at its N-terminus.

It is found in the cytoplasm. The enzyme catalyses L-aspartate + H(+) = beta-alanine + CO2. It functions in the pathway cofactor biosynthesis; (R)-pantothenate biosynthesis; beta-alanine from L-aspartate: step 1/1. Functionally, catalyzes the pyruvoyl-dependent decarboxylation of aspartate to produce beta-alanine. The sequence is that of Aspartate 1-decarboxylase from Pseudothermotoga lettingae (strain ATCC BAA-301 / DSM 14385 / NBRC 107922 / TMO) (Thermotoga lettingae).